We begin with the raw amino-acid sequence, 418 residues long: Serine hydroxymethyltransferase (418 aa).

(6S)-5,6,7,8-tetrahydrofolate-binding positions include Leu-121 and Gly-125–Leu-127. The residue at position 230 (Lys-230) is an N6-(pyridoxal phosphate)lysine. (6S)-5,6,7,8-tetrahydrofolate contacts are provided by residues Glu-246 and Ser-355–Phe-357.

Belongs to the SHMT family. Homodimer. The cofactor is pyridoxal 5'-phosphate.

Its subcellular location is the cytoplasm. The enzyme catalyses (6R)-5,10-methylene-5,6,7,8-tetrahydrofolate + glycine + H2O = (6S)-5,6,7,8-tetrahydrofolate + L-serine. It functions in the pathway one-carbon metabolism; tetrahydrofolate interconversion. It participates in amino-acid biosynthesis; glycine biosynthesis; glycine from L-serine: step 1/1. Catalyzes the reversible interconversion of serine and glycine with tetrahydrofolate (THF) serving as the one-carbon carrier. This reaction serves as the major source of one-carbon groups required for the biosynthesis of purines, thymidylate, methionine, and other important biomolecules. Also exhibits THF-independent aldolase activity toward beta-hydroxyamino acids, producing glycine and aldehydes, via a retro-aldol mechanism. In Streptococcus pneumoniae serotype 4 (strain ATCC BAA-334 / TIGR4), this protein is Serine hydroxymethyltransferase.